The sequence spans 696 residues: Putative cyclic nucleotide-gated ion channel 13 (696 aa).

The Cytoplasmic segment spans residues Met-1–Lys-81. The segment at Lys-45–Gln-65 is disordered. The chain crosses the membrane as a helical span at residues Ile-82 to Ile-102. The Extracellular portion of the chain corresponds to Val-103–Leu-116. The helical transmembrane segment at Glu-117–Phe-137 threads the bilayer. The Cytoplasmic portion of the chain corresponds to Gln-138 to Ser-170. A helical transmembrane segment spans residues Tyr-171–Ile-191. The Extracellular segment spans residues Pro-192–Asp-204. The chain crosses the membrane as a helical span at residues Tyr-205–Tyr-225. At Thr-226–Ala-243 the chain is on the cytoplasmic side. Residues Ala-244–Ile-264 form a helical membrane-spanning segment. Residues Ser-265–Val-367 are Extracellular-facing. Residues Gly-368 to Ile-388 form a helical membrane-spanning segment. Over Gly-389–Pro-696 the chain is Cytoplasmic. A nucleoside 3',5'-cyclic phosphate contacts are provided by residues Leu-474–Leu-598 and Glu-545. Positions Phe-590–Tyr-605 are calmodulin-binding. An IQ domain is found at Arg-610–Arg-639. Positions Asn-677–Pro-696 are disordered.

The protein belongs to the cyclic nucleotide-gated cation channel (TC 1.A.1.5) family. In terms of assembly, homotetramer or heterotetramer.

Its subcellular location is the cell membrane. Putative cyclic nucleotide-gated ion channel. This chain is Putative cyclic nucleotide-gated ion channel 13 (CNGC13), found in Arabidopsis thaliana (Mouse-ear cress).